The sequence spans 120 residues: Large ribosomal subunit protein uL18 (120 aa).

The segment at 1–23 is disordered; that stretch reads MKLSRKESVRRRHQRVRRKINGT. Residues 8–20 are compositionally biased toward basic residues; the sequence is SVRRRHQRVRRKI.

This sequence belongs to the universal ribosomal protein uL18 family. In terms of assembly, part of the 50S ribosomal subunit; part of the 5S rRNA/L5/L18/L25 subcomplex. Contacts the 5S and 23S rRNAs.

Functionally, this is one of the proteins that bind and probably mediate the attachment of the 5S RNA into the large ribosomal subunit, where it forms part of the central protuberance. This is Large ribosomal subunit protein uL18 from Microcystis aeruginosa (strain NIES-843 / IAM M-2473).